Consider the following 142-residue polypeptide: Hemoglobin subunit beta-C (142 aa).

The 142-residue stretch at 1-142 folds into the Globin domain; it reads MPNKALITGF…VASALAHRYH (142 aa). Heme b is bound by residues His-59 and His-88.

This sequence belongs to the globin family. In terms of assembly, heterotetramer of two alpha chains and two beta chains. As to expression, red blood cells.

Functionally, involved in oxygen transport from the lung to the various peripheral tissues. The protein is Hemoglobin subunit beta-C (HBBC) of Capra hircus (Goat).